The chain runs to 397 residues: Major outer membrane porin, serovar C (397 aa).

Residues 1–22 (MKKLLKSVLVFAALSSASSLQA) form the signal peptide.

It belongs to the chlamydial porin (CP) (TC 1.B.2) family. In terms of assembly, part of a disulfide cross-linked outer membrane complex (COMC) composed of the major outer membrane porin (MOMP), the small cysteine-rich protein (OmcA) and the large cysteine-rich periplasmic protein (OmcB).

The protein resides in the cell outer membrane. Its function is as follows. In elementary bodies (EBs, the infectious stage, which is able to survive outside the host cell) provides the structural integrity of the outer envelope through disulfide cross-links with the small cysteine-rich protein and the large cysteine-rich periplasmic protein. It has been described in publications as the Sarkosyl-insoluble COMC (Chlamydia outer membrane complex), and serves as the functional equivalent of peptidoglycan. In terms of biological role, permits diffusion of specific solutes through the outer membrane. The polypeptide is Major outer membrane porin, serovar C (ompA) (Chlamydia trachomatis).